The following is a 440-amino-acid chain: Glycerate 2-kinase (440 aa).

Lysine 58 is a binding site for substrate.

This sequence belongs to the glycerate kinase type-1 family. Homodimer. Mg(2+) is required as a cofactor. The cofactor is Ni(2+). Requires Mn(2+) as cofactor. It depends on Co(2+) as a cofactor.

It catalyses the reaction (R)-glycerate + ATP = (2R)-2-phosphoglycerate + ADP + H(+). In terms of biological role, catalyzes the ATP-dependent phosphorylation of D-glycerate to 2-phosphoglycerate. It can also utilize GTP, CTP, UTP, ADP or pyrophosphate as phosphate donor. This Pyrococcus horikoshii (strain ATCC 700860 / DSM 12428 / JCM 9974 / NBRC 100139 / OT-3) protein is Glycerate 2-kinase (gck).